Consider the following 472-residue polypeptide: 23S rRNA (uracil(1939)-C(5))-methyltransferase RlmD (472 aa).

The segment covering 1-15 has biased composition (basic residues); the sequence is MSRTAPHRRAPKRYK. The disordered stretch occupies residues 1–23; the sequence is MSRTAPHRRAPKRYKTPPPAPAH. Residues 23-87 form the TRAM domain; it reads HVVTGNEPVI…PKFEQAEVVQ (65 aa). Residues cysteine 100, cysteine 106, cysteine 109, and cysteine 188 each coordinate [4Fe-4S] cluster. S-adenosyl-L-methionine is bound by residues glutamine 296, phenylalanine 325, asparagine 330, glutamate 346, asparagine 374, and aspartate 395. The active-site Nucleophile is cysteine 428.

This sequence belongs to the class I-like SAM-binding methyltransferase superfamily. RNA M5U methyltransferase family. RlmD subfamily.

The catalysed reaction is uridine(1939) in 23S rRNA + S-adenosyl-L-methionine = 5-methyluridine(1939) in 23S rRNA + S-adenosyl-L-homocysteine + H(+). Its function is as follows. Catalyzes the formation of 5-methyl-uridine at position 1939 (m5U1939) in 23S rRNA. This is 23S rRNA (uracil(1939)-C(5))-methyltransferase RlmD from Paraburkholderia xenovorans (strain LB400).